We begin with the raw amino-acid sequence, 384 residues long: 8-amino-7-oxononanoate synthase (384 aa).

Arg-21 is a binding site for substrate. 108 to 109 (GF) provides a ligand contact to pyridoxal 5'-phosphate. His-133 contributes to the substrate binding site. Pyridoxal 5'-phosphate is bound by residues Ser-179, His-207, and Thr-233. Lys-236 carries the post-translational modification N6-(pyridoxal phosphate)lysine. A substrate-binding site is contributed by Thr-352.

It belongs to the class-II pyridoxal-phosphate-dependent aminotransferase family. BioF subfamily. In terms of assembly, homodimer. It depends on pyridoxal 5'-phosphate as a cofactor.

It catalyses the reaction 6-carboxyhexanoyl-[ACP] + L-alanine + H(+) = (8S)-8-amino-7-oxononanoate + holo-[ACP] + CO2. It functions in the pathway cofactor biosynthesis; biotin biosynthesis. Its function is as follows. Catalyzes the decarboxylative condensation of pimeloyl-[acyl-carrier protein] and L-alanine to produce 8-amino-7-oxononanoate (AON), [acyl-carrier protein], and carbon dioxide. In Escherichia coli O8 (strain IAI1), this protein is 8-amino-7-oxononanoate synthase.